Here is a 474-residue protein sequence, read N- to C-terminus: ATP synthase subunit beta, chloroplastic (474 aa).

Residue 155–162 (GGAGVGKT) participates in ATP binding.

The protein belongs to the ATPase alpha/beta chains family. In terms of assembly, F-type ATPases have 2 components, CF(1) - the catalytic core - and CF(0) - the membrane proton channel. CF(1) has five subunits: alpha(3), beta(3), gamma(1), delta(1), epsilon(1). CF(0) has four main subunits: a(1), b(1), b'(1) and c(9-12).

The protein localises to the plastid. Its subcellular location is the chloroplast thylakoid membrane. It carries out the reaction ATP + H2O + 4 H(+)(in) = ADP + phosphate + 5 H(+)(out). Functionally, produces ATP from ADP in the presence of a proton gradient across the membrane. The catalytic sites are hosted primarily by the beta subunits. This Thalassiosira pseudonana (Marine diatom) protein is ATP synthase subunit beta, chloroplastic.